A 171-amino-acid chain; its full sequence is Nicotinamide-nucleotide adenylyltransferase (171 aa).

Belongs to the archaeal NMN adenylyltransferase family.

It is found in the cytoplasm. The enzyme catalyses beta-nicotinamide D-ribonucleotide + ATP + H(+) = diphosphate + NAD(+). It functions in the pathway cofactor biosynthesis; NAD(+) biosynthesis; NAD(+) from nicotinamide D-ribonucleotide: step 1/1. The chain is Nicotinamide-nucleotide adenylyltransferase from Ignicoccus hospitalis (strain KIN4/I / DSM 18386 / JCM 14125).